The chain runs to 833 residues: ERAD-associated E3 ubiquitin-protein ligase component HRD3 (833 aa).

The N-terminal stretch at 1–20 (MITLLLYLCVICNAIVLIRA) is a signal peptide. N101, N123, and N142 each carry an N-linked (GlcNAc...) asparagine glycan. The Sel1-like 1 repeat unit spans residues 103–139 (SEATYTLSQIHLWSQYNFPHNMTLAHKYLEKFNDLTH). Sel1-like repeat units follow at residues 143 to 186 (HSAI…QLGN), 187 to 222 (LKAKQVLAYKYYSGFNVPRNFHKSLVLYRDIAEQLR), 413 to 445 (GRACIDLGLINQYITNNISQAISYYMKAMKTQA), 552 to 595 (ETAQ…KQGN), 596 to 627 (IDAGVVAGDIYFQMQNYSKAMALYQGAALKYS), and 628 to 663 (IQAIWNLGYMHEHGLGVNRDFHLAKRYYDQVSEHDH). An N-linked (GlcNAc...) asparagine glycan is attached at N429. A glycan (N-linked (GlcNAc...) asparagine) is linked at N611. The chain crosses the membrane as a helical span at residues 768–788 (LVTMGCILGIFLLSILMSTLA). A disordered region spans residues 805–824 (NGNRQQEQQQQQQAQGPPGW). The span at 809–819 (QQEQQQQQQAQ) shows a compositional bias: low complexity.

The protein belongs to the sel-1 family. As to quaternary structure, component of the HRD1 ubiquitin ligase complex which contains the E3 ligase HRD1, its cofactors HRD3, USA1 and DER1, substrate recruiting factor YOS9 and CDC48-binding protein UBX2. Within the complex, interacts directly with HRD1 and YOS9 (via N-terminus). In ERAD-L, HRD3 and YOS9 jointly bind misfolded glycoproteins in the endoplasmic reticulum (ER) lumen. Movement of ERAD-L substrates through the ER membrane is facilitated by HRD1 and DER1 which have lateral gates facing each other and which distort the membrane region between the lateral gates, making it much thinner than a normal phospholipid bilayer. Substrates insert into the membrane as a hairpin loop with one strand interacting with DER1 and the other with HRD1. The HRD1 complex interacts with the heterotrimeric CDC48-NPL4-UFD1 ATPase complex which is recruited by UBX2 via its interaction with CDC48 and which moves ubiquitinated substrates to the cytosol for targeting to the proteasome. The HRD1 complex interacts with the ERAD substrates HMG1 and HMG2. Interacts with KAR2.

Its subcellular location is the endoplasmic reticulum membrane. Its function is as follows. Component of the endoplasmic reticulum quality control (ERQC) system involved in ubiquitin-dependent degradation of misfolded endoplasmic reticulum proteins. Component of the HRD1 ubiquitin ligase complex, which is part of the ERAD-L and ERAD-M pathways responsible for the rapid degradation of soluble lumenal and membrane proteins with misfolded lumenal domains (ERAD-L), or ER-membrane proteins with misfolded transmembrane domains (ERAD-M). ERAD-L substrates are ubiquitinated through HRD1 in conjunction with the E2 ubiquitin-conjugating enzymes UBC1 and UBC7-CUE1. Ubiquitinated substrates are then removed to the cytosol via the action of the CDC48-NPL4-UFD1 ATPase complex and targeted to the proteasome. ERAD-M substrates are processed by the same HRD1-HRD3 core complex, but only a subset of the other components is required for ERAD-M. Stabilizes the HRD1 ubiquitin-protein ligase. Also functions in recruiting misfolded protein substrates in conjunction with YOS9. The chain is ERAD-associated E3 ubiquitin-protein ligase component HRD3 (HRD3) from Saccharomyces cerevisiae (strain ATCC 204508 / S288c) (Baker's yeast).